Here is a 286-residue protein sequence, read N- to C-terminus: Meiotically up-regulated gene 64 protein (286 aa).

The protein localises to the cytoplasm. Has a role in meiosis. The protein is Meiotically up-regulated gene 64 protein (mug64) of Schizosaccharomyces pombe (strain 972 / ATCC 24843) (Fission yeast).